We begin with the raw amino-acid sequence, 196 residues long: Nucleoid occlusion factor SlmA (196 aa).

In terms of domain architecture, HTH tetR-type spans 7–68 (SNRREEILQA…GLIEFIEEAL (62 aa)). Residues 31 to 50 (TTAKLAQQVGVSEAALYRHF) constitute a DNA-binding region (H-T-H motif). Residues 65–142 (EEALMSRINR…QLRQILRERK (78 aa)) are a coiled coil.

This sequence belongs to the nucleoid occlusion factor SlmA family. Homodimer. Interacts with FtsZ.

Its subcellular location is the cytoplasm. The protein localises to the nucleoid. Functionally, required for nucleoid occlusion (NO) phenomenon, which prevents Z-ring formation and cell division over the nucleoid. Acts as a DNA-associated cell division inhibitor that binds simultaneously chromosomal DNA and FtsZ, and disrupts the assembly of FtsZ polymers. SlmA-DNA-binding sequences (SBS) are dispersed on non-Ter regions of the chromosome, preventing FtsZ polymerization at these regions. The chain is Nucleoid occlusion factor SlmA from Vibrio vulnificus (strain CMCP6).